A 60-amino-acid polypeptide reads, in one-letter code: Sec-independent protein translocase protein TatA (60 aa).

The chain crosses the membrane as a helical span at residues Met1–Phe21.

Belongs to the TatA/E family. Forms a complex with TatC.

Its subcellular location is the cell membrane. Functionally, part of the twin-arginine translocation (Tat) system that transports large folded proteins containing a characteristic twin-arginine motif in their signal peptide across membranes. TatA could form the protein-conducting channel of the Tat system. This Anoxybacillus flavithermus (strain DSM 21510 / WK1) protein is Sec-independent protein translocase protein TatA.